A 198-amino-acid polypeptide reads, in one-letter code: Dephospho-CoA kinase (198 aa).

Residues 2-90 (LIAIVGKPGV…KLSLVTKPLL (89 aa)) form the DPCK domain. 10–15 (GVGKTS) is a binding site for ATP.

The protein belongs to the CoaE family.

It is found in the cytoplasm. It catalyses the reaction 3'-dephospho-CoA + ATP = ADP + CoA + H(+). The protein operates within cofactor biosynthesis; coenzyme A biosynthesis; CoA from (R)-pantothenate: step 5/5. Functionally, catalyzes the phosphorylation of the 3'-hydroxyl group of dephosphocoenzyme A to form coenzyme A. This is Dephospho-CoA kinase from Mycoplasma genitalium (strain ATCC 33530 / DSM 19775 / NCTC 10195 / G37) (Mycoplasmoides genitalium).